The sequence spans 616 residues: Dihydroxy-acid dehydratase (616 aa).

Mg(2+) is bound at residue D81. Residue C122 coordinates [2Fe-2S] cluster. Residues D123 and K124 each coordinate Mg(2+). K124 is modified (N6-carboxylysine). Position 195 (C195) interacts with [2Fe-2S] cluster. Residue E491 participates in Mg(2+) binding. Residue S517 is the Proton acceptor of the active site.

This sequence belongs to the IlvD/Edd family. As to quaternary structure, homodimer. It depends on [2Fe-2S] cluster as a cofactor. Mg(2+) is required as a cofactor.

The catalysed reaction is (2R)-2,3-dihydroxy-3-methylbutanoate = 3-methyl-2-oxobutanoate + H2O. The enzyme catalyses (2R,3R)-2,3-dihydroxy-3-methylpentanoate = (S)-3-methyl-2-oxopentanoate + H2O. Its pathway is amino-acid biosynthesis; L-isoleucine biosynthesis; L-isoleucine from 2-oxobutanoate: step 3/4. The protein operates within amino-acid biosynthesis; L-valine biosynthesis; L-valine from pyruvate: step 3/4. Functionally, functions in the biosynthesis of branched-chain amino acids. Catalyzes the dehydration of (2R,3R)-2,3-dihydroxy-3-methylpentanoate (2,3-dihydroxy-3-methylvalerate) into 2-oxo-3-methylpentanoate (2-oxo-3-methylvalerate) and of (2R)-2,3-dihydroxy-3-methylbutanoate (2,3-dihydroxyisovalerate) into 2-oxo-3-methylbutanoate (2-oxoisovalerate), the penultimate precursor to L-isoleucine and L-valine, respectively. The chain is Dihydroxy-acid dehydratase from Serratia proteamaculans (strain 568).